Here is a 396-residue protein sequence, read N- to C-terminus: Proteasome-activating nucleotidase (396 aa).

Positions 16 to 57 form a coiled coil; sequence ITYLKRRIRQLELQVRMLEADKERLERELSRLRSEMSRLRQP. ATP contacts are provided by residues 181–186 and His-320; that span reads GCGKTL. The docks into pockets in the proteasome alpha-ring to cause gate opening stretch occupies residues 394-396; it reads IYG.

Belongs to the AAA ATPase family. Homohexamer. The hexameric complex has a two-ring architecture resembling a top hat that caps the 20S proteasome core at one or both ends. Upon ATP-binding, the C-terminus of PAN interacts with the alpha-rings of the proteasome core by binding to the intersubunit pockets.

It is found in the cytoplasm. Its function is as follows. ATPase which is responsible for recognizing, binding, unfolding and translocation of substrate proteins into the archaeal 20S proteasome core particle. Is essential for opening the gate of the 20S proteasome via an interaction with its C-terminus, thereby allowing substrate entry and access to the site of proteolysis. Thus, the C-termini of the proteasomal ATPase function like a 'key in a lock' to induce gate opening and therefore regulate proteolysis. Unfolding activity requires energy from ATP hydrolysis, whereas ATP binding alone promotes ATPase-20S proteasome association which triggers gate opening, and supports translocation of unfolded substrates. This Pyrococcus abyssi (strain GE5 / Orsay) protein is Proteasome-activating nucleotidase.